A 352-amino-acid polypeptide reads, in one-letter code: Protein NDRG4 (352 aa).

Residues S298, S317, and S323 each carry the phosphoserine modification. Low complexity predominate over residues 314–323; that stretch reads RTASLTSASS. Positions 314–352 are disordered; sequence RTASLTSASSVDGSRPQACTHSESSEGLGQVNHTMEVSC. Polar residues predominate over residues 330–352; that stretch reads QACTHSESSEGLGQVNHTMEVSC.

The protein belongs to the NDRG family. Post-translationally, phosphorylated in an aortic smooth muscle cell line, following PDGF treatment. Expressed predominantly in brain and heart (at protein level). In the brain, detected in astrocytes. Isoform 1 and isoform 2 are only expressed in brain. Isoform 3 is expressed in both heart and brain. Up-regulated in glioblastoma multiforme cells.

The protein localises to the cytoplasm. The protein resides in the cytosol. In terms of biological role, contributes to the maintenance of intracerebral BDNF levels within the normal range, which is necessary for the preservation of spatial learning and the resistance to neuronal cell death caused by ischemic stress. May enhance growth factor-induced ERK1 and ERK2 phosphorylation, including that induced by PDGF and FGF. May attenuate NGF-promoted ELK1 phosphorylation in a microtubule-dependent manner. The sequence is that of Protein NDRG4 (NDRG4) from Homo sapiens (Human).